The chain runs to 348 residues: NADH-ubiquinone oxidoreductase chain 2 (348 aa).

11 helical membrane-spanning segments follow: residues 3–23 (PVVL…TFIG), 25–45 (HWLL…PLMI), 67–87 (SALL…WSLL), 95–115 (ATLV…HFWL), 118–138 (VLQG…KLAP), 149–171 (LNSN…GGLN), 178–198 (ILAY…HYSP), 203–223 (LNLA…KLFN), 240–260 (LSII…LSGF), 274–294 (DLAI…FFYL), and 324–344 (LILM…PTIF).

The protein belongs to the complex I subunit 2 family.

It localises to the mitochondrion inner membrane. It carries out the reaction a ubiquinone + NADH + 5 H(+)(in) = a ubiquinol + NAD(+) + 4 H(+)(out). Its function is as follows. Core subunit of the mitochondrial membrane respiratory chain NADH dehydrogenase (Complex I) that is believed to belong to the minimal assembly required for catalysis. Complex I functions in the transfer of electrons from NADH to the respiratory chain. The immediate electron acceptor for the enzyme is believed to be ubiquinone. This is NADH-ubiquinone oxidoreductase chain 2 (MT-ND2) from Squalus acanthias (Spiny dogfish).